A 258-amino-acid chain; its full sequence is Trypsin (258 aa).

An N-terminal signal peptide occupies residues 1–16 (MIRFTLALAVIGVTFA). The propeptide at 17–29 (ASTPQIETNPNLE) is activation peptide. In terms of domain architecture, Peptidase S1 spans 30 to 257 (IIGGHDANII…FRDWINEETE (228 aa)). Cysteine 55 and cysteine 71 are joined by a disulfide. The Charge relay system role is filled by histidine 70. An N-linked (GlcNAc...) asparagine glycan is attached at asparagine 110. Aspartate 117 (charge relay system) is an active-site residue. Asparagine 130 and asparagine 188 each carry an N-linked (GlcNAc...) asparagine glycan. 2 disulfides stabilise this stretch: cysteine 182–cysteine 197 and cysteine 209–cysteine 233. Serine 213 (charge relay system) is an active-site residue.

It belongs to the peptidase S1 family. In terms of tissue distribution, expressed in larval carcasses and gut, and adult gut.

The protein resides in the secreted. It catalyses the reaction Preferential cleavage: Arg-|-Xaa, Lys-|-Xaa.. The protein is Trypsin of Phaedon cochleariae (Mustard beetle).